A 274-amino-acid chain; its full sequence is Urease accessory protein UreD (274 aa).

This sequence belongs to the UreD family. As to quaternary structure, ureD, UreF and UreG form a complex that acts as a GTP-hydrolysis-dependent molecular chaperone, activating the urease apoprotein by helping to assemble the nickel containing metallocenter of UreC. The UreE protein probably delivers the nickel.

It is found in the cytoplasm. Its function is as follows. Required for maturation of urease via the functional incorporation of the urease nickel metallocenter. This Lachnoclostridium phytofermentans (strain ATCC 700394 / DSM 18823 / ISDg) (Clostridium phytofermentans) protein is Urease accessory protein UreD.